The following is a 278-amino-acid chain: Replication protein A 32 kDa subunit B (278 aa).

The OB DNA-binding region spans 70-143 (VVIVGRISRM…RSVNVFSVRP (74 aa)).

This sequence belongs to the replication factor A protein 2 family. Heterotrimer of RPA1, RPA2 and RPA3 (canonical replication protein A complex). Post-translationally, phosphorylated in a cell-cycle-dependent manner (from the S phase until mitosis). In response to DNA damage, recruited to DNA-repair nuclear foci, as a hypophosphorylated form.

The protein resides in the nucleus. Functionally, component of the replication protein A complex (RPA) required for DNA recombination, repair and replication. The activity of RPA is mediated by single-stranded DNA binding and protein interactions. Required fo cell division in meristems. Involved in the maintenance of transcriptional epigenetic gene silencing (TGS) at specific loci (including some transposons) by regulating histone H3 acetylation, 'Lys-4' and 'Lys-9' methylation. The sequence is that of Replication protein A 32 kDa subunit B (RPA2B) from Arabidopsis thaliana (Mouse-ear cress).